The primary structure comprises 758 residues: Catalase-peroxidase (758 aa).

Residues methionine 1 to valine 10 show a composition bias toward polar residues. A disordered region spans residues methionine 1–arginine 57. Residues tryptophan 128–tyrosine 250 constitute a cross-link (tryptophyl-tyrosyl-methioninium (Trp-Tyr) (with M-276)). Histidine 129 serves as the catalytic Proton acceptor. A cross-link (tryptophyl-tyrosyl-methioninium (Tyr-Met) (with W-128)) is located at residues tyrosine 250–methionine 276. Histidine 291 provides a ligand contact to heme b.

Belongs to the peroxidase family. Peroxidase/catalase subfamily. In terms of assembly, homodimer or homotetramer. Requires heme b as cofactor. Post-translationally, formation of the three residue Trp-Tyr-Met cross-link is important for the catalase, but not the peroxidase activity of the enzyme.

The enzyme catalyses H2O2 + AH2 = A + 2 H2O. The catalysed reaction is 2 H2O2 = O2 + 2 H2O. Functionally, bifunctional enzyme with both catalase and broad-spectrum peroxidase activity. The sequence is that of Catalase-peroxidase from Salinispora tropica (strain ATCC BAA-916 / DSM 44818 / JCM 13857 / NBRC 105044 / CNB-440).